The sequence spans 303 residues: Methionyl-tRNA formyltransferase (303 aa).

108–111 (SDLP) is a binding site for (6S)-5,6,7,8-tetrahydrofolate.

This sequence belongs to the Fmt family.

The catalysed reaction is L-methionyl-tRNA(fMet) + (6R)-10-formyltetrahydrofolate = N-formyl-L-methionyl-tRNA(fMet) + (6S)-5,6,7,8-tetrahydrofolate + H(+). In terms of biological role, attaches a formyl group to the free amino group of methionyl-tRNA(fMet). The formyl group appears to play a dual role in the initiator identity of N-formylmethionyl-tRNA by promoting its recognition by IF2 and preventing the misappropriation of this tRNA by the elongation apparatus. In Rickettsia peacockii (strain Rustic), this protein is Methionyl-tRNA formyltransferase.